Consider the following 420-residue polypeptide: L-rhamnose isomerase (420 aa).

Residues histidine 262, aspartate 294, and aspartate 296 each contribute to the Mn(2+) site.

The protein belongs to the rhamnose isomerase family. In terms of assembly, homotetramer. Mn(2+) serves as cofactor.

The protein localises to the cytoplasm. It catalyses the reaction L-rhamnopyranose = L-rhamnulose. The protein operates within carbohydrate degradation; L-rhamnose degradation; glycerone phosphate from L-rhamnose: step 1/3. Functionally, catalyzes the interconversion of L-rhamnose and L-rhamnulose. The protein is L-rhamnose isomerase of Pectobacterium carotovorum subsp. carotovorum (strain PC1).